Here is a 210-residue protein sequence, read N- to C-terminus: Na(+)-translocating NADH-quinone reductase subunit D (210 aa).

The next 6 helical transmembrane spans lie at 14 to 34 (PIVNNNPIALQILGVCSALAV), 42 to 62 (LVMALALTAVTAFSNLFISLI), 72 to 92 (IIVQMTIIASLVIVVDQLLQA), 103 to 123 (VFVGLIITNCIVMGRAEAYAM), 131 to 151 (FMDGIGNGLGYGVILLAVGFV), and 178 to 198 (NGMLLLPPSAFFLIGILIWII).

It belongs to the NqrDE/RnfAE family. Composed of six subunits; NqrA, NqrB, NqrC, NqrD, NqrE and NqrF.

It is found in the cell inner membrane. The enzyme catalyses a ubiquinone + n Na(+)(in) + NADH + H(+) = a ubiquinol + n Na(+)(out) + NAD(+). Functionally, NQR complex catalyzes the reduction of ubiquinone-1 to ubiquinol by two successive reactions, coupled with the transport of Na(+) ions from the cytoplasm to the periplasm. NqrA to NqrE are probably involved in the second step, the conversion of ubisemiquinone to ubiquinol. The chain is Na(+)-translocating NADH-quinone reductase subunit D from Shewanella putrefaciens (strain CN-32 / ATCC BAA-453).